A 1067-amino-acid chain; its full sequence is TBC1 domain family member 31 (1067 aa).

6 WD repeats span residues 36 to 75, 76 to 119, 120 to 161, 162 to 201, 202 to 249, and 250 to 288; these read GKVV…FRLV, LKTG…SWMR, GHEG…KLNI, RQSV…CKYQ, LPLP…RVIQ, and MPSQ…RFIN. The Rab-GAP TBC domain occupies 419–594; the sequence is EYPAKYRMFV…RLFDNIFSNH (176 aa). A coiled-coil region spans residues 724 to 773; it reads QQELLQKAEEQRKHVLEQEEEKLTQQRAKLAAMKRELKVKELQLLDATRR. 2 stretches are compositionally biased toward basic and acidic residues: residues 896–912 and 926–937; these read KADA…EELQ and MREEAHRKKDEA. Disordered stretches follow at residues 896 to 955 and 1045 to 1067; these read KADA…HSDG and AARA…PVSP. Polar residues-rich tracts occupy residues 941–953 and 1052–1067; these read IQES…STHS and SSAS…PVSP.

It localises to the cytoplasm. It is found in the cytoskeleton. Its subcellular location is the microtubule organizing center. The protein localises to the centrosome. The protein resides in the centriolar satellite. It localises to the cilium basal body. Molecular adapter which is involved in cilium biogenesis. Part of a functional complex including OFD1 a centriolar protein involved in cilium assembly. Could regulate the cAMP-dependent phosphorylation of OFD1, and its subsequent ubiquitination by PJA2 which ultimately leads to its proteasomal degradation. This is TBC1 domain family member 31 from Oryzias latipes (Japanese rice fish).